Here is a 283-residue protein sequence, read N- to C-terminus: 4-diphosphocytidyl-2-C-methyl-D-erythritol kinase (283 aa).

The active site involves lysine 10. 99–109 (PMGGGLGGGSS) provides a ligand contact to ATP. Aspartate 141 is an active-site residue.

This sequence belongs to the GHMP kinase family. IspE subfamily. As to quaternary structure, homodimer.

The catalysed reaction is 4-CDP-2-C-methyl-D-erythritol + ATP = 4-CDP-2-C-methyl-D-erythritol 2-phosphate + ADP + H(+). Its pathway is isoprenoid biosynthesis; isopentenyl diphosphate biosynthesis via DXP pathway; isopentenyl diphosphate from 1-deoxy-D-xylulose 5-phosphate: step 3/6. In terms of biological role, catalyzes the phosphorylation of the position 2 hydroxy group of 4-diphosphocytidyl-2C-methyl-D-erythritol. This chain is 4-diphosphocytidyl-2-C-methyl-D-erythritol kinase, found in Escherichia coli O7:K1 (strain IAI39 / ExPEC).